A 197-amino-acid chain; its full sequence is 3-isopropylmalate dehydratase small subunit (197 aa).

It belongs to the LeuD family. LeuD type 1 subfamily. Heterodimer of LeuC and LeuD.

It carries out the reaction (2R,3S)-3-isopropylmalate = (2S)-2-isopropylmalate. Its pathway is amino-acid biosynthesis; L-leucine biosynthesis; L-leucine from 3-methyl-2-oxobutanoate: step 2/4. Functionally, catalyzes the isomerization between 2-isopropylmalate and 3-isopropylmalate, via the formation of 2-isopropylmaleate. The sequence is that of 3-isopropylmalate dehydratase small subunit from Mycobacterium sp. (strain JLS).